The sequence spans 754 residues: MGTQPARKLRNRVFPHPHNHRKEKPMANDQVPASKCPVMHGANTTGQNGNLNWWPNALNLDILHQHDRKTNPMDDGFNYAEAFQQLDLAAVKQDLHHLMTDSQSWWPADWGHYGGLMIRMAWHAAGTYRIADGRGGAATGNQRFAPLNSWPDNVNLDKARRLLWPIKKKYGNKLSWGDLIILAGTMAYESMGLKVYGFAGGREDIWHPEKDIYWGAEKEWLASSDHRYGSEDRESLENPLAAVQMGLIYVNPEGVDGHPDPLCTAQDVRTTFARMAMNDEETVALTAGGHTVGKCHGNSKAELIGPEPEGADVVEQGLGWHNQNGKGVGRETMSSGIEGAWTTHPTQWDNGYFYMLFNHEWELKKSPAGAWQWEPVNIKEEDKPVDVEDPNIRHNPIMTDADMAMIKDPIYRQISERFYREPDYFAEVFAKAWFKLTHRDLGPKSRYLGPDVPQEDLIWQDPIPPVDYTLSEGEIKELEQQILASGLTVSELVCTAWDSARTFRSSDYRGGANGARIRLEPQKNWPGNEPTRLAKVLAVLENIQANFAKPVSLADLIVLGGGAAIAKAALDGGIEVNVPFLPGRGDATQAMTDAESFTPLEPIHDGYRNWLKQDYAVSPEELLLERTQLMGLTAPEMTVLIGGMRVLGTNHGGTKHGVFTDRVGVLSNDFFVNLTDMAYQWRPAGNNLYEIGDRQTGEVKWTATKVDLVFGSNSILRSYAEVYAQDDNREKFVRDFVAAWTKVMNADRFDLPRG.

The segment at methionine 1 to aspartate 29 is disordered. Basic residues predominate over residues arginine 7 to glutamate 23. Tryptophan 106 acts as the Tryptophan radical intermediate in catalysis. A cross-link (tryptophyl-tyrosyl-methioninium (Trp-Tyr) (with M-275)) is located at residues tryptophan 122 to tyrosine 249. Histidine 123 acts as the Proton acceptor in catalysis. The tryptophyl-tyrosyl-methioninium (Tyr-Met) (with W-122) cross-link spans tyrosine 249–methionine 275. Residue histidine 290 coordinates heme b.

This sequence belongs to the peroxidase family. Peroxidase/catalase subfamily. In terms of assembly, homodimer. It depends on heme b as a cofactor. Formation of the three residue Trp-Tyr-Met cross-link is important for the catalase, but not the peroxidase activity of the enzyme.

It carries out the reaction H2O2 + AH2 = A + 2 H2O. It catalyses the reaction 2 H2O2 = O2 + 2 H2O. In terms of biological role, bifunctional enzyme with both catalase and broad-spectrum peroxidase activity. Also displays NADH oxidase, isoniazid hydrazine lyase and isonicotinoyl-NAD synthase activities. This chain is Catalase-peroxidase, found in Synechocystis sp. (strain ATCC 27184 / PCC 6803 / Kazusa).